Consider the following 1273-residue polypeptide: Homeobox protein cut-like ceh-44 (1273 aa).

Coiled coils occupy residues 101–407 and 440–468; these read LLKG…DGFK and RQKNTDSELIEKIQEAKRNKAVCELKFED. 3 consecutive DNA-binding regions (CUT) follow at residues 591–681, 832–919, and 978–1065; these read NVQA…LSPR, QAQY…KQPK, and IDES…KEES. Positions 1069-1100 are disordered; it reads VKAKIESVPAPREAPRPVKRKHSSDTDDYDLN. The segment at residues 1103-1162 is a DNA-binding region (homeobox); sequence KPIQRTVITDYQKDTLRFVFVNEQHPSNELCEQISLKLDMSLRTVQNWFHNHRTRSKARE.

The protein belongs to the CUT homeobox family.

Its subcellular location is the nucleus. Functionally, probable DNA-binding regulatory protein involved in cell-fate specification. In Caenorhabditis elegans, this protein is Homeobox protein cut-like ceh-44.